Reading from the N-terminus, the 392-residue chain is S-adenosylmethionine synthase (392 aa).

His-20 is an ATP binding site. Residue Asp-22 coordinates Mg(2+). Glu-48 lines the K(+) pocket. Glu-61 and Gln-106 together coordinate L-methionine. The interval 106 to 116 is flexible loop; that stretch reads QSRDIINAIEK. Residues 171-173, Asp-248, 254-255, Ala-271, and Lys-275 each bind ATP; these read DSK and RK. Asp-248 is an L-methionine binding site. Lys-279 contributes to the L-methionine binding site.

The protein belongs to the AdoMet synthase family. Homotetramer; dimer of dimers. Requires Mg(2+) as cofactor. The cofactor is K(+).

The protein resides in the cytoplasm. The catalysed reaction is L-methionine + ATP + H2O = S-adenosyl-L-methionine + phosphate + diphosphate. It functions in the pathway amino-acid biosynthesis; S-adenosyl-L-methionine biosynthesis; S-adenosyl-L-methionine from L-methionine: step 1/1. Its function is as follows. Catalyzes the formation of S-adenosylmethionine (AdoMet) from methionine and ATP. The overall synthetic reaction is composed of two sequential steps, AdoMet formation and the subsequent tripolyphosphate hydrolysis which occurs prior to release of AdoMet from the enzyme. This Borreliella burgdorferi (strain ATCC 35210 / DSM 4680 / CIP 102532 / B31) (Borrelia burgdorferi) protein is S-adenosylmethionine synthase.